The following is a 1838-amino-acid chain: Nuclear pore complex protein NUP205 (1838 aa).

This sequence belongs to the NUP186/NUP192/NUP205 family. In terms of assembly, part of the nuclear pore complex (NPC). The NPC has an eight-fold symmetrical structure comprising a central transport channel and two rings, the cytoplasmic and nuclear rings, to which eight filaments are attached. The cytoplasmic filaments have loose ends, while the nuclear filaments are joined in a distal ring, forming a nuclear basket. NPCs are highly dynamic in configuration and composition, and can be devided in 3 subcomplexes, the NUP62 subcomplex, the NUP107-160 subcomplex and the NUP93 subcomplex, containing approximately 30 different nucleoporin proteins.

The protein resides in the nucleus envelope. It localises to the nucleus. It is found in the nuclear pore complex. This chain is Nuclear pore complex protein NUP205, found in Arabidopsis thaliana (Mouse-ear cress).